The primary structure comprises 889 residues: Cytoplasmic aconitate hydratase (889 aa).

Residues glutamine 86 and 205-207 (DSH) each bind substrate. [4Fe-4S] cluster-binding residues include cysteine 437, cysteine 503, and cysteine 506. Residues arginine 536, arginine 541, arginine 699, and 779–780 (SR) contribute to the substrate site.

This sequence belongs to the aconitase/IPM isomerase family. As to quaternary structure, interacts (when associated with the 4Fe-4S) with FBXL5. Interacts with frataxin(81-210). [4Fe-4S] cluster is required as a cofactor.

It localises to the cytoplasm. It is found in the cytosol. It carries out the reaction citrate = D-threo-isocitrate. In terms of biological role, bifunctional iron sensor that switches between 2 activities depending on iron availability. Iron deprivation, promotes its mRNA binding activity through which it regulates the expression of genes involved in iron uptake, sequestration and utilization. Binds to iron-responsive elements (IRES) in the untranslated region of target mRNAs preventing for instance the translation of ferritin and aminolevulinic acid synthase and stabilizing the transferrin receptor mRNA. Its function is as follows. Conversely, when cellular iron levels are high, binds a 4Fe-4S cluster which precludes RNA binding activity and promotes the aconitase activity, the isomerization of citrate to isocitrate via cis-aconitate. The chain is Cytoplasmic aconitate hydratase (ACO1) from Bos taurus (Bovine).